The sequence spans 487 residues: Benzaldehyde dehydrogenase [NAD(+)] (487 aa).

NAD(+) is bound at residue 232-237 (GSTQVG). Catalysis depends on residues glutamate 254 and cysteine 288.

The protein belongs to the aldehyde dehydrogenase family. In terms of assembly, homotetramer.

It catalyses the reaction benzaldehyde + NAD(+) + H2O = benzoate + NADH + 2 H(+). This chain is Benzaldehyde dehydrogenase [NAD(+)] (xylC), found in Pseudomonas putida (Arthrobacter siderocapsulatus).